The following is a 421-amino-acid chain: 4-hydroxy-3-methylbut-2-en-1-yl diphosphate synthase (flavodoxin) (421 aa).

The disordered stretch occupies residues 1–20; the sequence is MHDAVTRPTPPSDATSWPRR. The [4Fe-4S] cluster site is built by Cys311, Cys314, Cys357, and Glu364.

The protein belongs to the IspG family. Requires [4Fe-4S] cluster as cofactor.

The enzyme catalyses (2E)-4-hydroxy-3-methylbut-2-enyl diphosphate + oxidized [flavodoxin] + H2O + 2 H(+) = 2-C-methyl-D-erythritol 2,4-cyclic diphosphate + reduced [flavodoxin]. It functions in the pathway isoprenoid biosynthesis; isopentenyl diphosphate biosynthesis via DXP pathway; isopentenyl diphosphate from 1-deoxy-D-xylulose 5-phosphate: step 5/6. Its function is as follows. Converts 2C-methyl-D-erythritol 2,4-cyclodiphosphate (ME-2,4cPP) into 1-hydroxy-2-methyl-2-(E)-butenyl 4-diphosphate. This Stenotrophomonas maltophilia (strain R551-3) protein is 4-hydroxy-3-methylbut-2-en-1-yl diphosphate synthase (flavodoxin).